The primary structure comprises 156 residues: Small ribosomal subunit protein uS7 (156 aa).

The protein belongs to the universal ribosomal protein uS7 family. Part of the 30S ribosomal subunit. Contacts proteins S9 and S11.

Functionally, one of the primary rRNA binding proteins, it binds directly to 16S rRNA where it nucleates assembly of the head domain of the 30S subunit. Is located at the subunit interface close to the decoding center, probably blocks exit of the E-site tRNA. The polypeptide is Small ribosomal subunit protein uS7 (Sorangium cellulosum (strain So ce56) (Polyangium cellulosum (strain So ce56))).